The primary structure comprises 212 residues: 2',3'-cyclic-nucleotide 3'-phosphodiesterase (212 aa).

The active-site Proton donor/acceptor is histidine 51. Threonine 53 contributes to the substrate binding site. Histidine 146 serves as the catalytic Proton donor/acceptor. The substrate site is built by serine 148 and tyrosine 151.

It belongs to the 2H phosphoesterase superfamily. CPD1 family.

Its subcellular location is the golgi apparatus. It catalyses the reaction a nucleoside 2',3'-cyclic phosphate + H2O = a nucleoside 2'-phosphate + H(+). Its function is as follows. Involved in the metabolism of ADP-ribose 1',2'-cyclic phosphate which is produced as a consequence of tRNA splicing. The sequence is that of 2',3'-cyclic-nucleotide 3'-phosphodiesterase (cpd-7) from Neurospora crassa (strain ATCC 24698 / 74-OR23-1A / CBS 708.71 / DSM 1257 / FGSC 987).